The chain runs to 441 residues: 23S rRNA (uracil(1939)-C(5))-methyltransferase RlmD (441 aa).

One can recognise a TRAM domain in the interval K10–K68. [4Fe-4S] cluster is bound by residues C81, C87, C90, and C169. Residues Q274, F303, N308, E324, D351, and D372 each contribute to the S-adenosyl-L-methionine site. The active-site Nucleophile is the C398.

This sequence belongs to the class I-like SAM-binding methyltransferase superfamily. RNA M5U methyltransferase family. RlmD subfamily.

The catalysed reaction is uridine(1939) in 23S rRNA + S-adenosyl-L-methionine = 5-methyluridine(1939) in 23S rRNA + S-adenosyl-L-homocysteine + H(+). Functionally, catalyzes the formation of 5-methyl-uridine at position 1939 (m5U1939) in 23S rRNA. In Pseudoalteromonas translucida (strain TAC 125), this protein is 23S rRNA (uracil(1939)-C(5))-methyltransferase RlmD.